Consider the following 241-residue polypeptide: tRNA (guanine-N(1)-)-methyltransferase (241 aa).

S-adenosyl-L-methionine is bound by residues Gly108 and 127 to 132 (LGDYVL).

This sequence belongs to the RNA methyltransferase TrmD family. Homodimer.

It localises to the cytoplasm. The catalysed reaction is guanosine(37) in tRNA + S-adenosyl-L-methionine = N(1)-methylguanosine(37) in tRNA + S-adenosyl-L-homocysteine + H(+). In terms of biological role, specifically methylates guanosine-37 in various tRNAs. This chain is tRNA (guanine-N(1)-)-methyltransferase, found in Streptococcus suis (strain 98HAH33).